We begin with the raw amino-acid sequence, 455 residues long: NADH-quinone oxidoreductase subunit N (455 aa).

Transmembrane regions (helical) follow at residues 25 to 45 (AIVPITIIGLLAIFGFNISEY), 61 to 81 (FSVAFSSLFIIITVFLVALSH), 99 to 119 (VFLLSGAVAMVSFGNLSMFFL), 149 to 169 (FLMGSFASGIILFGICLIYGA), 193 to 213 (IGIVFLLIGMLFKIATVPFHF), 257 to 277 (IQIIIVCVAIASMLLGNIMAL), 285 to 305 (MFAFSGISHAGFMVSTLLLTS), 312 to 332 (LYYASAYAIAGIAFFAVVMYV), 355 to 375 (AGILTAALLSMAGIPVLSGFF), 391 to 411 (IVVFVAIISSIISVGYYFKII), and 432 to 452 (IVAVVALILNIALGLFPNVVL).

It belongs to the complex I subunit 2 family. In terms of assembly, NDH-1 is composed of 14 different subunits. Subunits NuoA, H, J, K, L, M, N constitute the membrane sector of the complex.

The protein resides in the cell inner membrane. The enzyme catalyses a quinone + NADH + 5 H(+)(in) = a quinol + NAD(+) + 4 H(+)(out). In terms of biological role, NDH-1 shuttles electrons from NADH, via FMN and iron-sulfur (Fe-S) centers, to quinones in the respiratory chain. The immediate electron acceptor for the enzyme in this species is believed to be a menaquinone. Couples the redox reaction to proton translocation (for every two electrons transferred, four hydrogen ions are translocated across the cytoplasmic membrane), and thus conserves the redox energy in a proton gradient. The protein is NADH-quinone oxidoreductase subunit N of Flavobacterium psychrophilum (strain ATCC 49511 / DSM 21280 / CIP 103535 / JIP02/86).